A 198-amino-acid chain; its full sequence is tRNA (pseudouridine(54)-N(1))-methyltransferase (198 aa).

An S-adenosyl-L-methionine-binding site is contributed by leucine 128.

Belongs to the methyltransferase superfamily. TrmY family. In terms of assembly, homodimer.

The protein resides in the cytoplasm. It catalyses the reaction pseudouridine(54) in tRNA + S-adenosyl-L-methionine = N(1)-methylpseudouridine(54) in tRNA + S-adenosyl-L-homocysteine + H(+). In terms of biological role, specifically catalyzes the N1-methylation of pseudouridine at position 54 (Psi54) in tRNAs. In Haloarcula marismortui (strain ATCC 43049 / DSM 3752 / JCM 8966 / VKM B-1809) (Halobacterium marismortui), this protein is tRNA (pseudouridine(54)-N(1))-methyltransferase.